A 200-amino-acid chain; its full sequence is Small ribosomal subunit protein eS8B (200 aa).

The disordered stretch occupies residues 1–41 (MGITRDSRHKRSATGAKRAQYRKKRKFELGRQPSNTRIGPK). Phosphoserine occurs at positions 62 and 99. The disordered stretch occupies residues 124 to 145 (KGKKATATPTPKSKHVQRKHSA). The span at 135 to 145 (KSKHVQRKHSA) shows a compositional bias: basic residues. Phosphoserine occurs at positions 150, 154, and 171.

This sequence belongs to the eukaryotic ribosomal protein eS8 family. Component of the small ribosomal subunit (SSU). Mature yeast ribosomes consist of a small (40S) and a large (60S) subunit. The 40S small subunit contains 1 molecule of ribosomal RNA (18S rRNA) and at least 33 different proteins. The large 60S subunit contains 3 rRNA molecules (25S, 5.8S and 5S rRNA) and at least 46 different proteins.

Its subcellular location is the cytoplasm. In terms of biological role, component of the ribosome, a large ribonucleoprotein complex responsible for the synthesis of proteins in the cell. The small ribosomal subunit (SSU) binds messenger RNAs (mRNAs) and translates the encoded message by selecting cognate aminoacyl-transfer RNA (tRNA) molecules. The large subunit (LSU) contains the ribosomal catalytic site termed the peptidyl transferase center (PTC), which catalyzes the formation of peptide bonds, thereby polymerizing the amino acids delivered by tRNAs into a polypeptide chain. The nascent polypeptides leave the ribosome through a tunnel in the LSU and interact with protein factors that function in enzymatic processing, targeting, and the membrane insertion of nascent chains at the exit of the ribosomal tunnel. The polypeptide is Small ribosomal subunit protein eS8B (rps802) (Schizosaccharomyces pombe (strain 972 / ATCC 24843) (Fission yeast)).